The sequence spans 1059 residues: MDEVDDQYTPADVETAIETYWDDTNAYEATKEAHADDPSFFFVDGPPYTSGQMHLGTAWNKTLKDAIIRYKRMTGHHVTDRPGYDMHGLPIEVKVEEELGFETKRDIEEYGMESFIEECKRFAVDNRKAMDEDFQSIGVWMDWDNPYETLSPEYMEAAWWAFQQVDDRGLVERGKRSVSYCPRCQTAIAANEVEYDEITSPSIYVRFPLSNKEGSLVIWTTTPWTIPANTFVAVDKDLTYQAVRAEQGDDSEVLYIAESCVEDVLKQGRYDDYTVVEEYSGDELTGWEYDHPLADQVQTYADFAGAGEVYTAEYVEADRTGLVHSAPGHGQEDFARGQELDLETFVPVDGRGEFTEAAGQYTGTFVRDANDEIINDLDEEGVLLSSGTHEHRYGHCWRCDTDIIFLATDQWFITVTDIKDELLDNINDSEWYPQWARDNRFRDFVADAPDWNVSRQRYWGIPLPIWESVDDADTGDNSTSDDWIVIGTREELAERADQDVNPAEIDLHRPAVDPLTITENGSRYERVPDVFDVWIDSSVASWGTIDYPGETDAYDELWPADFIVEAHDQTRGWFWSQLGMGTAATGQVPYEEVMMHGFANDENGRKMSKSRGNIVTPEEAIDRAGRDPLRAYLLSHDQQGVDLSFEWDGLGEMQSTLNIFWNVFRFPLPYMDLDGYDPATADLSEGSMNIVDEWVLSRLQSVKATTRAAWEEYEIDTAVNTILEFITDDVSRFYIKAIRERMWADEDSASKRGAYATLSTVLDETIRLLAPIAPYLTEQMYQHLNGSETTVHALSYPSVDPEWQNETLESEMAVLRDVEEAAANARQQGGRKLRWPVPRVIVEAEDDSIADAVESLSGLLADRVNTEAIETVTQFDELIERAQPEMSVIGPEFGADAQRVMDAIEGGSREILTEGVTIDGVQYEITDEMITFDAEPPAYISAADFDGGTVYVDTSLTESIEAEGYARDVIRRIQQMRKELALDVDTEIQTAVDVADDRVADLVAQQRDVVATETRTNAFVDNIDRASENGQALIEEWDVEGVTVTIGVAPLKAQLSDQS.

The 'HIGH' region motif lies at 47-57 (PYTSGQMHLGT). The 'KMSKS' region signature appears at 606–610 (KMSKS). Lys609 is an ATP binding site.

It belongs to the class-I aminoacyl-tRNA synthetase family. IleS type 2 subfamily. Monomer. The cofactor is Zn(2+).

It is found in the cytoplasm. It carries out the reaction tRNA(Ile) + L-isoleucine + ATP = L-isoleucyl-tRNA(Ile) + AMP + diphosphate. Functionally, catalyzes the attachment of isoleucine to tRNA(Ile). As IleRS can inadvertently accommodate and process structurally similar amino acids such as valine, to avoid such errors it has two additional distinct tRNA(Ile)-dependent editing activities. One activity is designated as 'pretransfer' editing and involves the hydrolysis of activated Val-AMP. The other activity is designated 'posttransfer' editing and involves deacylation of mischarged Val-tRNA(Ile). This Haloquadratum walsbyi (strain DSM 16790 / HBSQ001) protein is Isoleucine--tRNA ligase.